Reading from the N-terminus, the 294-residue chain is Nucleotide-binding protein CLL_A3342 (294 aa).

ATP is bound at residue 8 to 15 (GLSGAGKT). 59-62 (DIRG) contributes to the GTP binding site.

It belongs to the RapZ-like family.

Functionally, displays ATPase and GTPase activities. This is Nucleotide-binding protein CLL_A3342 from Clostridium botulinum (strain Eklund 17B / Type B).